Reading from the N-terminus, the 231-residue chain is 2-C-methyl-D-erythritol 4-phosphate cytidylyltransferase (231 aa).

It belongs to the IspD/TarI cytidylyltransferase family. IspD subfamily.

It carries out the reaction 2-C-methyl-D-erythritol 4-phosphate + CTP + H(+) = 4-CDP-2-C-methyl-D-erythritol + diphosphate. It participates in isoprenoid biosynthesis; isopentenyl diphosphate biosynthesis via DXP pathway; isopentenyl diphosphate from 1-deoxy-D-xylulose 5-phosphate: step 2/6. Functionally, catalyzes the formation of 4-diphosphocytidyl-2-C-methyl-D-erythritol from CTP and 2-C-methyl-D-erythritol 4-phosphate (MEP). This Bacillus licheniformis (strain ATCC 14580 / DSM 13 / JCM 2505 / CCUG 7422 / NBRC 12200 / NCIMB 9375 / NCTC 10341 / NRRL NRS-1264 / Gibson 46) protein is 2-C-methyl-D-erythritol 4-phosphate cytidylyltransferase.